The primary structure comprises 233 residues: Probable fimbrial chaperone protein ElfD (233 aa).

The signal sequence occupies residues 1–26 (MKTCITKGIVTVSLTAILLSCSSTWA).

This sequence belongs to the periplasmic pilus chaperone family.

The protein resides in the periplasm. In terms of biological role, part of the elfADCG fimbrial operon, which could be required for adherence to host epithelial cells. Could be required for the biogenesis of the ElfA fimbriae. The protein is Probable fimbrial chaperone protein ElfD (elfD) of Escherichia coli O157:H7.